Reading from the N-terminus, the 146-residue chain is Small ribosomal subunit protein uS13 (146 aa).

The segment at 119 to 146 (ARGKKVRGQRTRSTGRKGRTVGVVRRKR) is disordered.

It belongs to the universal ribosomal protein uS13 family. As to quaternary structure, part of the 30S ribosomal subunit. Forms a loose heterodimer with protein S19. Forms two bridges to the 50S subunit in the 70S ribosome.

In terms of biological role, located at the top of the head of the 30S subunit, it contacts several helices of the 16S rRNA. In the 70S ribosome it contacts the 23S rRNA (bridge B1a) and protein L5 of the 50S subunit (bridge B1b), connecting the 2 subunits; these bridges are implicated in subunit movement. This chain is Small ribosomal subunit protein uS13, found in Archaeoglobus fulgidus (strain ATCC 49558 / DSM 4304 / JCM 9628 / NBRC 100126 / VC-16).